A 184-amino-acid chain; its full sequence is Class II hydrophobin 6 (184 aa).

A signal peptide spans 1–16; it reads MNFMLLSAALASMAVA. Disulfide bonds link Cys122-Cys169, Cys130-Cys160, Cys131-Cys143, and Cys170-Cys181.

It belongs to the cerato-ulmin hydrophobin family. In terms of assembly, homotetramer. Further self-assembles to form highly ordered films at water-air interfaces through intermolecular interactions. Expressed in the mycellium.

It localises to the secreted. Its function is as follows. Aerial growth, conidiation, and dispersal of filamentous fungi in the environment rely upon a capability of their secreting small amphipathic proteins called hydrophobins (HPBs) with low sequence identity. Class I can self-assemble into an outermost layer of rodlet bundles on aerial cell surfaces, conferring cellular hydrophobicity that supports fungal growth, development and dispersal; whereas Class II form highly ordered films at water-air interfaces through intermolecular interactions but contribute nothing to the rodlet structure. Hcf-6 is a class II hydrophobin that is involved in adhesion and in tomato plants infection. Is secreted to form a coat both around and beneath the fungus. The chain is Class II hydrophobin 6 from Passalora fulva (Tomato leaf mold).